The primary structure comprises 203 residues: Urease accessory protein UreG (203 aa).

Position 11-18 (11-18 (GPVGSGKT)) interacts with GTP.

It belongs to the SIMIBI class G3E GTPase family. UreG subfamily. As to quaternary structure, homodimer. UreD, UreF and UreG form a complex that acts as a GTP-hydrolysis-dependent molecular chaperone, activating the urease apoprotein by helping to assemble the nickel containing metallocenter of UreC. The UreE protein probably delivers the nickel.

It localises to the cytoplasm. Functionally, facilitates the functional incorporation of the urease nickel metallocenter. This process requires GTP hydrolysis, probably effectuated by UreG. In Prochlorococcus marinus (strain MIT 9301), this protein is Urease accessory protein UreG.